Consider the following 132-residue polypeptide: Histone H2B.1 (132 aa).

Low complexity predominate over residues Met-1 to Ala-13. Residues Met-1–Glu-40 form a disordered region. The residue at position 7 (Lys-7) is an N6-acetyllysine; alternate. Lys-7 participates in a covalent cross-link: Glycyl lysine isopeptide (Lys-Gly) (interchain with G-Cter in SUMO); alternate. Ser-11 carries the phosphoserine modification. Lys-12 carries the N6-acetyllysine modification. Residue Lys-17 is modified to N6-acetyllysine; alternate. Lys-17 is covalently cross-linked (Glycyl lysine isopeptide (Lys-Gly) (interchain with G-Cter in SUMO); alternate). A Glycyl lysine isopeptide (Lys-Gly) (interchain with G-Cter in SUMO) cross-link involves residue Lys-18. A Glycyl lysine isopeptide (Lys-Gly) (interchain with G-Cter in ubiquitin) cross-link involves residue Lys-125.

The protein belongs to the histone H2B family. The nucleosome is a histone octamer containing two molecules each of H2A, H2B, H3 and H4 assembled in one H3-H4 heterotetramer and two H2A-H2B heterodimers. The octamer wraps approximately 147 bp of DNA. In terms of processing, monoubiquitinated by the UBC2-BRE1 complex to form H2BK123ub1. H2BK123ub1 gives a specific tag for epigenetic transcriptional activation and is also prerequisite for H3K4me and H3K79me formation. H2BK123ub1 also modulates the formation of double-strand breaks during meiosis and is a prerequisite for DNA-damage checkpoint activation. Phosphorylated by STE20 to form H2BS10ph during progression through meiotic prophase. May be correlated with chromosome condensation. Post-translationally, acetylated by GCN5 to form H2BK11ac and H2BK16ac. H2BK16ac can also be formed by ESA1. Acetylation of N-terminal lysines and particularly formation of H2BK11acK16ac has a positive effect on transcription. In terms of processing, sumoylation to form H2BK6su and probably also H2BK16su or H2BK17su, occurs preferentially near the telomeres and represses gene transcription.

It localises to the nucleus. The protein resides in the chromosome. Functionally, core component of nucleosome. Nucleosomes wrap and compact DNA into chromatin, limiting DNA accessibility to the cellular machineries which require DNA as a template. Histones thereby play a central role in transcription regulation, DNA repair, DNA replication and chromosomal stability. DNA accessibility is regulated via a complex set of post-translational modifications of histones, also called histone code, and nucleosome remodeling. In Eremothecium gossypii (strain ATCC 10895 / CBS 109.51 / FGSC 9923 / NRRL Y-1056) (Yeast), this protein is Histone H2B.1 (HTB1).